Consider the following 314-residue polypeptide: Porphobilinogen deaminase (314 aa).

Position 243 is an S-(dipyrrolylmethanemethyl)cysteine (Cys243).

This sequence belongs to the HMBS family. In terms of assembly, monomer. Dipyrromethane serves as cofactor.

The catalysed reaction is 4 porphobilinogen + H2O = hydroxymethylbilane + 4 NH4(+). It functions in the pathway porphyrin-containing compound metabolism; protoporphyrin-IX biosynthesis; coproporphyrinogen-III from 5-aminolevulinate: step 2/4. Its function is as follows. Tetrapolymerization of the monopyrrole PBG into the hydroxymethylbilane pre-uroporphyrinogen in several discrete steps. In Bordetella bronchiseptica (strain ATCC BAA-588 / NCTC 13252 / RB50) (Alcaligenes bronchisepticus), this protein is Porphobilinogen deaminase.